The chain runs to 154 residues: Nucleoside diphosphate kinase A2 (154 aa).

Positions 13, 61, 89, 95, 106, and 116 each coordinate ATP. Residue His-119 is the Pros-phosphohistidine intermediate of the active site.

Belongs to the NDK family. It depends on Mg(2+) as a cofactor.

The protein resides in the cytoplasm. It catalyses the reaction a 2'-deoxyribonucleoside 5'-diphosphate + ATP = a 2'-deoxyribonucleoside 5'-triphosphate + ADP. The enzyme catalyses a ribonucleoside 5'-diphosphate + ATP = a ribonucleoside 5'-triphosphate + ADP. Its function is as follows. Major role in the synthesis of nucleoside triphosphates other than ATP. The ATP gamma phosphate is transferred to the NDP beta phosphate via a ping-pong mechanism, using a phosphorylated active-site intermediate. The sequence is that of Nucleoside diphosphate kinase A2 from Xenopus laevis (African clawed frog).